The following is a 150-amino-acid chain: UPF0178 protein Sbal_1771 (150 aa).

This sequence belongs to the UPF0178 family.

This chain is UPF0178 protein Sbal_1771, found in Shewanella baltica (strain OS155 / ATCC BAA-1091).